Here is a 539-residue protein sequence, read N- to C-terminus: MRLNRETIKDRAAWEKIGVRPPYFDLDEVEKNTKEQPKWVHFGGGNIFRGFVAAVLQNLLEEGKEDTGINVIELFDYEVIDKVYKPYDNLSIAVTIKPDGDFEKRIIASVMEALKGDPSHPDWERAKEIFRNPSLQLASLTITEKGYNIEDQAGNLFPQVMEDMKNGPVSPQTSMGKVAALLYERFKAGRLPIALLSLDNFSRNGEKLYSSVKRISEEWVKSGLVEKDFIDYLEKDVAFPWSMIDKIVPGPSEFIKEHLEKLGIEGMEIFVTSKRTHIAPFVNMEWAQYLVIEDSFPNGRPKLEGADRNVFLTDRETVEKAERMKVTTCLNPLHTALAIFGCLLGYKKIADEMKDPLLKKLVEGVGEEGIKVVVDPGIINPREFLNEVINIRLPNPYLPDTPQRIATDTSQKMPIRFGETIKAYHERPDLDPRNLKYIPLVIAGWCRYLMGIDDEGREMQLSPDPLLENLRSYVSKIKFGDPESTDDHLKPILSSQQLFRVNLYEVGLGEKIEELFKKMITGPRAVRKTLEEVVGREDG.

NAD(+) is bound at residue Trp39–Gly50.

Belongs to the mannitol dehydrogenase family. UxuB subfamily.

It carries out the reaction D-mannonate + NAD(+) = keto-D-fructuronate + NADH + H(+). The protein operates within carbohydrate metabolism. Its function is as follows. Catalyzes the reduction of D-fructuronate (D-FruA) to D-mannonate (D-ManA). In Thermotoga maritima (strain ATCC 43589 / DSM 3109 / JCM 10099 / NBRC 100826 / MSB8), this protein is D-mannonate oxidoreductase.